The chain runs to 61 residues: Alpha-conotoxine-like Am1.3 (61 aa).

The signal sequence occupies residues 1-21 (MGMRMMFTVFLLVVLATTVVS). The propeptide occupies 22–44 (FMSGRASHGRNAAASDLIALTIK). C60 bears the Cysteine amide mark.

It belongs to the conotoxin A superfamily. Is not hydroxylated. In terms of processing, contains 2 disulfide bonds. As to expression, expressed by the venom duct.

The protein resides in the secreted. Functionally, alpha-conotoxins act on postsynaptic membranes, they bind to the nicotinic acetylcholine receptors (nAChR) and thus inhibit them. This is Alpha-conotoxine-like Am1.3 from Conus amadis (Amadis cone).